The sequence spans 230 residues: Ribonuclease 3 (230 aa).

The 128-residue stretch at 7–134 folds into the RNase III domain; sequence LEELESKLGI…VIAAIYLDKG (128 aa). E47 contributes to the Mg(2+) binding site. D51 is an active-site residue. Residues D120 and E123 each coordinate Mg(2+). E123 is a catalytic residue. A DRBM domain is found at 161–230; the sequence is DYKTRLQEIL…ACKALKGLDN (70 aa).

This sequence belongs to the ribonuclease III family. As to quaternary structure, homodimer. The cofactor is Mg(2+).

It is found in the cytoplasm. The catalysed reaction is Endonucleolytic cleavage to 5'-phosphomonoester.. Its function is as follows. Digests double-stranded RNA. Involved in the processing of primary rRNA transcript to yield the immediate precursors to the large and small rRNAs (23S and 16S). Processes some mRNAs, and tRNAs when they are encoded in the rRNA operon. Processes pre-crRNA and tracrRNA of type II CRISPR loci if present in the organism. This Clostridium acetobutylicum (strain ATCC 824 / DSM 792 / JCM 1419 / IAM 19013 / LMG 5710 / NBRC 13948 / NRRL B-527 / VKM B-1787 / 2291 / W) protein is Ribonuclease 3.